The primary structure comprises 140 residues: Lipoprotein MlpG (140 aa).

The N-terminal stretch at 1-17 (MKIINILFCLFLLMLNG) is a signal peptide. Cys-18 carries N-palmitoyl cysteine lipidation. Residue Cys-18 is the site of S-diacylglycerol cysteine attachment. The disordered stretch occupies residues 22 to 57 (DTNTKQTKSRQKRDLTQKEATQEKPKSKSKEDLLRE). The span at 33–57 (KRDLTQKEATQEKPKSKSKEDLLRE) shows a compositional bias: basic and acidic residues.

It belongs to the Multicopy lipoprotein (Mlp) family.

The protein localises to the cell outer membrane. An outer membrane protein that may participate in pathogenesis. Some human Lyme disease patients have antibodies against this protein. The Mlp proteins probably undergo intragenic recombination, generating new alleles. This Borreliella burgdorferi (strain ATCC 35210 / DSM 4680 / CIP 102532 / B31) (Borrelia burgdorferi) protein is Lipoprotein MlpG.